The primary structure comprises 141 residues: Hemoglobin subunit alpha (141 aa).

One can recognise a Globin domain in the interval 1–141 (VLSPDDKKHV…VSTVLTSKYR (141 aa)). Residue Ser3 is modified to Phosphoserine. An N6-succinyllysine mark is found at Lys7 and Lys11. Lys16 carries the post-translational modification N6-acetyllysine; alternate. Position 16 is an N6-succinyllysine; alternate (Lys16). Tyr24 carries the post-translational modification Phosphotyrosine. Ser35 carries the phosphoserine modification. Lys40 bears the N6-succinyllysine mark. Ser49 carries the phosphoserine modification. His58 serves as a coordination point for O2. His87 serves as a coordination point for heme b. The residue at position 102 (Ser102) is a Phosphoserine. At Thr108 the chain carries Phosphothreonine. Ser124 and Ser131 each carry phosphoserine. Residues Thr134 and Thr137 each carry the phosphothreonine modification. Position 138 is a phosphoserine (Ser138).

The protein belongs to the globin family. In terms of assembly, heterotetramer of two alpha chains and two beta chains. In terms of tissue distribution, red blood cells.

Functionally, involved in oxygen transport from the lung to the various peripheral tissues. Its function is as follows. Hemopressin acts as an antagonist peptide of the cannabinoid receptor CNR1. Hemopressin-binding efficiently blocks cannabinoid receptor CNR1 and subsequent signaling. This Cercocebus atys (Sooty mangabey) protein is Hemoglobin subunit alpha (HBA).